The following is a 244-amino-acid chain: 1-(5-phosphoribosyl)-5-[(5-phosphoribosylamino)methylideneamino] imidazole-4-carboxamide isomerase (244 aa).

Aspartate 9 (proton acceptor) is an active-site residue. Catalysis depends on aspartate 131, which acts as the Proton donor.

It belongs to the HisA/HisF family.

It localises to the cytoplasm. The enzyme catalyses 1-(5-phospho-beta-D-ribosyl)-5-[(5-phospho-beta-D-ribosylamino)methylideneamino]imidazole-4-carboxamide = 5-[(5-phospho-1-deoxy-D-ribulos-1-ylimino)methylamino]-1-(5-phospho-beta-D-ribosyl)imidazole-4-carboxamide. It participates in amino-acid biosynthesis; L-histidine biosynthesis; L-histidine from 5-phospho-alpha-D-ribose 1-diphosphate: step 4/9. This Campylobacter jejuni subsp. jejuni serotype O:6 (strain 81116 / NCTC 11828) protein is 1-(5-phosphoribosyl)-5-[(5-phosphoribosylamino)methylideneamino] imidazole-4-carboxamide isomerase.